A 564-amino-acid chain; its full sequence is Hexose transporter HXT17 (564 aa).

Residues 1–12 (MQSSTESDRDIQ) show a composition bias toward basic and acidic residues. The segment at 1–22 (MQSSTESDRDIQDGPDADIHVA) is disordered. Residues 1–52 (MQSSTESDRDIQDGPDADIHVAPPVEKEWSDGFDDNEVINGDNVEPPKRGLI) lie on the Cytoplasmic side of the membrane. The helical transmembrane segment at 53–73 (GYLVIYLLCYPISFGGFLPGW) threads the bilayer. The Extracellular portion of the chain corresponds to 74-109 (DSGITAGFINMDNFKMNFGSYKHSTGEYYLSNVRMG). Residues 110-130 (LLVAMFSIGCAIGGLIFARLA) traverse the membrane as a helical segment. Over 131-136 (DTLGRR) the chain is Cytoplasmic. A helical membrane pass occupies residues 137-157 (LAIVIVVLVYMVGAIIQISSN). Residues 158-167 (HKWYQYFVGK) are Extracellular-facing. The chain crosses the membrane as a helical span at residues 168 to 188 (IIYGLGAGGCSVLCPMLLSEI). Topologically, residues 189–194 (APTDLR) are cytoplasmic. A helical membrane pass occupies residues 195–215 (GGLVSLYQLNMTFGIFLGYCS). The Extracellular portion of the chain corresponds to 216 to 229 (VYGTRKYDNTAQWR). Residues 230–250 (VPLGLCFLWTLIIIIGMLLVP) traverse the membrane as a helical segment. Residues 251–333 (ESPRYLIECE…VQTFLQLTGE (83 aa)) are Cytoplasmic-facing. The chain crosses the membrane as a helical span at residues 334 to 350 (NYFFFYGTTIFKSVGLT). Topologically, residues 351–356 (DGFETS) are extracellular. The helical transmembrane segment at 357-374 (IVLGTVNFFSTIIAVMVV) threads the bilayer. Residues 375–381 (DKIGRRK) lie on the Cytoplasmic side of the membrane. A helical transmembrane segment spans residues 382 to 402 (CLLFGAAGMMACMVIFASIGV). The Extracellular portion of the chain corresponds to 403 to 424 (KCLYPHGQDGPSSKGAGNAMIV). A helical membrane pass occupies residues 425-445 (FTCFYIFCFATTWAPVAYIVV). The Cytoplasmic portion of the chain corresponds to 446–462 (AESFPSKVKSRAMSIST). The chain crosses the membrane as a helical span at residues 463-483 (ACNWLWQFLIGFFTPFITGSI). Residue His484 is a topological domain, extracellular. The helical transmembrane segment at 485–505 (FYYGYVFVGCLVAMFLYVFFF) threads the bilayer. At 506-564 (LPETIGLSLEEIQLLYEEGIKPWKSASWVPPSRRGIPSEESKTEKKDWKKFLKFSKGSD) the chain is on the cytoplasmic side.

It belongs to the major facilitator superfamily. Sugar transporter (TC 2.A.1.1) family.

It is found in the membrane. In terms of biological role, probable glucose transporter. This Saccharomyces cerevisiae (strain ATCC 204508 / S288c) (Baker's yeast) protein is Hexose transporter HXT17 (HXT17).